A 535-amino-acid polypeptide reads, in one-letter code: Flavin-containing monooxygenase 2 (535 aa).

Position 2 is an N-acetylalanine (alanine 2). FAD contacts are provided by residues 9–13, glutamate 32, 40–41, and 61–62; these read GAGVS, VW, and NT. NADP(+) is bound by residues 60–61 and 195–198; these read TN and SGSD. Lysine 492 participates in a covalent cross-link: Glycyl lysine isopeptide (Lys-Gly) (interchain with G-Cter in SUMO). A helical transmembrane segment spans residues 510-530; the sequence is FSVSFLLKILGLLAVVVAFFC.

The protein belongs to the FMO family. FAD is required as a cofactor. Requires Mg(2+) as cofactor. As to expression, expressed in lung (at protein level). Expressed predominantly in lung, and at a much lesser extent in kidney. Also expressed in fetal lung, but not in liver, kidney and brain.

It localises to the microsome membrane. The protein resides in the endoplasmic reticulum membrane. Its function is as follows. Catalyzes the oxidative metabolism of numerous xenobiotics, including mainly therapeutic drugs and insecticides that contain a soft nucleophile, most commonly nitrogen and sulfur and participates to their bioactivation. Specifically catalyzes S-oxygenation of sulfur derived compounds such as thioureas-derived compounds, thioetherorganophosphates to their sulfenic acid. In vitro, catalyzes S-oxygenation of the second-line antitubercular drugs thiacetazone (TAZ) and ethionamide (ETA), forming a sulfinic acid and a carbodiimide via a postulated sulfenic acid intermediate. Also catalyzes S-oxygenation of the thioether-containing organophosphate insecticides, phorate and disulfoton. The chain is Flavin-containing monooxygenase 2 from Homo sapiens (Human).